The chain runs to 624 residues: MSSGVQGGSAANANAYQTHPLRDAASALGTLSPQAYVDVVSAAQRNFLERMSRLASEQCDAQPVTDDARLDRLDDKPALRAPRSDAAHAADGNARGNGGASGAAKLTELLGVLMSVISASSLDELRQRSDIWNQMSKAAQDNLTSLSDKFQCATDDAKAATDAAERAAAAAKQAAADAKAADAAADAAQKRYDDAMKQGLPDDQLKTLQAALEQAKQQAGDAHARADALQADAAGKLDAATALATQAREWEQQIDDAVNQASRQYGASASLRTPPSPKLSGAAELTAVLGKLQELISSGNVKELESKQKLFTEMQAKREAELQKKSDEYQEQVKKAEEMQKTMGCIGKIVGWVITAVSFAAAAFTGGASLALAAVGLALAVGDEISRATTGVSFMDKLMQPVMDAILKPLMEVISSLITKALVACGVDQQKAELAGAILGAVVTGVALVAAAFVGASAVKAVASKVIDAVAGQLTKLMDSAIGKMLVQLIEKFSEKSGLQALGSRTATAMTRMRRAIGVEAKEDGMLLANRFEKAGTVMNVGNQVSQAAGGIVVGVERAKAMGLLADVKEAMYDIKLLGDLLKQAVESFAEHNRALAQLMQQMSDAGEMQTATGKLILRNARAV.

The tract at residues 54–99 (LASEQCDAQPVTDDARLDRLDDKPALRAPRSDAAHAADGNARGNGG) is disordered. The span at 66–88 (DDARLDRLDDKPALRAPRSDAAH) shows a compositional bias: basic and acidic residues. Residues 313–343 (EMQAKREAELQKKSDEYQEQVKKAEEMQKTM) are a coiled coil. Helical transmembrane passes span 359 to 379 (FAAA…GLAL), 405 to 425 (AILK…LVAC), and 434 to 454 (LAGA…AAFV).

Belongs to the SctE/SipB/YopB family.

The protein resides in the secreted. Its subcellular location is the host membrane. Plays a role in the bacterium-induced formation of multinucleated giant cell (MNGC), which is formed after host cell fusion, as well as in the intercellular spreading of bacteria and in the induction of apoptosis in macrophages. May act in concert with other effector proteins to induce fusion of host cell membranes. This Burkholderia thailandensis (strain ATCC 700388 / DSM 13276 / CCUG 48851 / CIP 106301 / E264) protein is Translocator protein BipB (bipB).